The sequence spans 324 residues: Probable UDP-sugar transporter protein SLC35A4 (324 aa).

Residues Met1–Arg18 lie on the Cytoplasmic side of the membrane. Residues Trp19–Leu39 form a helical membrane-spanning segment. The Lumenal portion of the chain corresponds to Cys40–Ser52. The helical transmembrane segment at Ala53–Trp73 threads the bilayer. At Gln74–Gln85 the chain is on the cytoplasmic side. A helical membrane pass occupies residues Ala86 to Leu106. The Lumenal segment spans residues Gln107–Gln142. The chain crosses the membrane as a helical span at residues Gly143–Val163. Over Pro164–Met180 the chain is Cytoplasmic. The chain crosses the membrane as a helical span at residues Pro181 to Leu201. At Ser202–Gln214 the chain is on the lumenal side. Residues Leu215–Leu235 form a helical membrane-spanning segment. The Cytoplasmic portion of the chain corresponds to His236–Ser250. A helical transmembrane segment spans residues Gly251–Met271. Residues Lys272–Ser275 are Lumenal-facing. Residues Ser276 to Leu298 form a helical membrane-spanning segment. At Arg299–Arg324 the chain is on the cytoplasmic side.

It belongs to the nucleotide-sugar transporter family. SLC35A subfamily. As to quaternary structure, found in a complex with SLC35A2 and SLC35A3.

The protein localises to the golgi apparatus membrane. It carries out the reaction CDP-L-ribitol(in) + CDP(out) = CDP-L-ribitol(out) + CDP(in). Its function is as follows. Mediates the transport of CDP-ribitol. Does not exhibit CMP-sialic acid, UDP-galactose and UDP-N-acetylglucosamine transport activity. This is Probable UDP-sugar transporter protein SLC35A4 from Pongo abelii (Sumatran orangutan).